The following is a 196-amino-acid chain: Glycerol-3-phosphate acyltransferase (196 aa).

5 helical membrane-spanning segments follow: residues 1 to 21, 53 to 73, 76 to 96, 115 to 135, and 141 to 161; these read MGFIIGFLLSVFGYLLGSILF, KYGALVFLLDAFKGFLIAILD, YIDPSSLWFGIVMVSPVIGHI, VVFGISPLLALKMFLVWAFVF, and VSLASITSVLVGYFLFLEGDF.

It belongs to the PlsY family. In terms of assembly, probably interacts with PlsX.

The protein localises to the cell inner membrane. It catalyses the reaction an acyl phosphate + sn-glycerol 3-phosphate = a 1-acyl-sn-glycero-3-phosphate + phosphate. It functions in the pathway lipid metabolism; phospholipid metabolism. Its function is as follows. Catalyzes the transfer of an acyl group from acyl-phosphate (acyl-PO(4)) to glycerol-3-phosphate (G3P) to form lysophosphatidic acid (LPA). This enzyme utilizes acyl-phosphate as fatty acyl donor, but not acyl-CoA or acyl-ACP. In Hydrogenobaculum sp. (strain Y04AAS1), this protein is Glycerol-3-phosphate acyltransferase.